Reading from the N-terminus, the 315-residue chain is DNA-directed RNA polymerase subunit alpha (315 aa).

The tract at residues 1–228 (MIEMEKPKVE…EHLNLFITLK (228 aa)) is alpha N-terminal domain (alpha-NTD). The tract at residues 245–315 (KEKVLEMTIE…LGLGLRPSDE (71 aa)) is alpha C-terminal domain (alpha-CTD).

Belongs to the RNA polymerase alpha chain family. As to quaternary structure, homodimer. The RNAP catalytic core consists of 2 alpha, 1 beta, 1 beta' and 1 omega subunit. When a sigma factor is associated with the core the holoenzyme is formed, which can initiate transcription.

It catalyses the reaction RNA(n) + a ribonucleoside 5'-triphosphate = RNA(n+1) + diphosphate. In terms of biological role, DNA-dependent RNA polymerase catalyzes the transcription of DNA into RNA using the four ribonucleoside triphosphates as substrates. This Alkaliphilus metalliredigens (strain QYMF) protein is DNA-directed RNA polymerase subunit alpha.